The primary structure comprises 208 residues: Small ribosomal subunit protein uS4 (208 aa).

The S4 RNA-binding domain occupies 99–165 (RRLDNVVFQL…PRLKEILSSL (67 aa)).

Belongs to the universal ribosomal protein uS4 family. In terms of assembly, part of the 30S ribosomal subunit. Contacts protein S5. The interaction surface between S4 and S5 is involved in control of translational fidelity.

Its function is as follows. One of the primary rRNA binding proteins, it binds directly to 16S rRNA where it nucleates assembly of the body of the 30S subunit. Functionally, with S5 and S12 plays an important role in translational accuracy. The chain is Small ribosomal subunit protein uS4 from Desulfitobacterium hafniense (strain Y51).